A 784-amino-acid chain; its full sequence is Homoaconitase, mitochondrial (784 aa).

A mitochondrion-targeting transit peptide spans 1-32 (MIHPVRRALAVAASRAPRQFLAAASRTTSVRS). Residues Cys399, Cys468, and Cys471 each coordinate [4Fe-4S] cluster. Residues 572 to 596 (EAGLTPESTSSSSSSSSSSEEESLT) are disordered. Low complexity predominate over residues 578 to 589 (ESTSSSSSSSSS).

The protein belongs to the aconitase/IPM isomerase family. [4Fe-4S] cluster serves as cofactor.

The protein localises to the mitochondrion. It catalyses the reaction (2R,3S)-homoisocitrate = cis-homoaconitate + H2O. It functions in the pathway amino-acid biosynthesis; L-lysine biosynthesis via AAA pathway; L-alpha-aminoadipate from 2-oxoglutarate: step 3/5. Functionally, catalyzes the reversible hydration of cis-homoaconitate to (2R,3S)-homoisocitrate, a step in the alpha-aminoadipate pathway for lysine biosynthesis. The protein is Homoaconitase, mitochondrial (lys-4) of Neurospora crassa (strain ATCC 24698 / 74-OR23-1A / CBS 708.71 / DSM 1257 / FGSC 987).